A 160-amino-acid polypeptide reads, in one-letter code: Transmembrane protein 216 (160 aa).

The next 4 helical transmembrane spans lie at 41–61, 68–88, 101–121, and 134–154; these read WYFA…GVIL, LILD…RLFY, LFVS…YLLL, and AVLL…ISIF.

Part of the tectonic-like complex (also named B9 complex).

The protein resides in the membrane. Its subcellular location is the cytoplasm. It is found in the cytoskeleton. The protein localises to the cilium basal body. Functionally, part of the tectonic-like complex which is required for tissue-specific ciliogenesis and may regulate ciliary membrane composition. The protein is Transmembrane protein 216 (tmem216) of Danio rerio (Zebrafish).